The following is a 544-amino-acid chain: CTP synthase (544 aa).

The interval 1 to 265 (MTRYIFITGG…DTQVLAYFGL (265 aa)) is amidoligase domain. CTP is bound at residue Ser13. Ser13 contacts UTP. Position 14–19 (14–19 (SLGKGL)) interacts with ATP. Tyr54 contacts L-glutamine. Asp71 lines the ATP pocket. Asp71 and Glu139 together coordinate Mg(2+). CTP is bound by residues 146-148 (DIE), 186-191 (KTKPTQ), and Lys222. Residues 186-191 (KTKPTQ) and Lys222 contribute to the UTP site. An ATP-binding site is contributed by Val240. Residues 291-543 (TIAVVGKYTS…IKAAIEQSRL (253 aa)) enclose the Glutamine amidotransferase type-1 domain. Gly353 contacts L-glutamine. The Nucleophile; for glutamine hydrolysis role is filled by Cys380. L-glutamine-binding positions include 381–384 (FGMQ), Glu404, and Arg472. Active-site residues include His516 and Glu518.

It belongs to the CTP synthase family. In terms of assembly, homotetramer.

It carries out the reaction UTP + L-glutamine + ATP + H2O = CTP + L-glutamate + ADP + phosphate + 2 H(+). The enzyme catalyses L-glutamine + H2O = L-glutamate + NH4(+). The catalysed reaction is UTP + NH4(+) + ATP = CTP + ADP + phosphate + 2 H(+). It functions in the pathway pyrimidine metabolism; CTP biosynthesis via de novo pathway; CTP from UDP: step 2/2. With respect to regulation, allosterically activated by GTP, when glutamine is the substrate; GTP has no effect on the reaction when ammonia is the substrate. The allosteric effector GTP functions by stabilizing the protein conformation that binds the tetrahedral intermediate(s) formed during glutamine hydrolysis. Inhibited by the product CTP, via allosteric rather than competitive inhibition. Catalyzes the ATP-dependent amination of UTP to CTP with either L-glutamine or ammonia as the source of nitrogen. Regulates intracellular CTP levels through interactions with the four ribonucleotide triphosphates. The protein is CTP synthase of Azospirillum brasilense.